Reading from the N-terminus, the 543-residue chain is Telomerase Cajal body protein 1 homolog (543 aa).

The disordered stretch occupies residues 95 to 128; the sequence is GRPKNAVESPHAGVPMETSLAAEEEANGDEEEES. Positions 116–127 are enriched in acidic residues; it reads AEEEANGDEEEE. WD repeat units lie at residues 237-283, 291-329, and 378-421; these read PEGG…LRCS, DEVM…RFCD, and GHKG…QPLV.

Belongs to the TCAB1 family.

It is found in the nucleus. The protein localises to the cajal body. In terms of biological role, RNA chaperone that plays a key role in Cajal body formation. Specifically recognizes and binds the Cajal body box (CAB box) present in both small Cajal body RNAs (scaRNAs). Probably acts by mediating localization of scaRNAs to Cajal bodies. This Drosophila melanogaster (Fruit fly) protein is Telomerase Cajal body protein 1 homolog.